A 527-amino-acid polypeptide reads, in one-letter code: ATP synthase subunit alpha (527 aa).

169 to 176 (GDRQTGKT) contacts ATP.

The protein belongs to the ATPase alpha/beta chains family. As to quaternary structure, F-type ATPases have 2 components, CF(1) - the catalytic core - and CF(0) - the membrane proton channel. CF(1) has five subunits: alpha(3), beta(3), gamma(1), delta(1), epsilon(1). CF(0) has three main subunits: a(1), b(2) and c(9-12). The alpha and beta chains form an alternating ring which encloses part of the gamma chain. CF(1) is attached to CF(0) by a central stalk formed by the gamma and epsilon chains, while a peripheral stalk is formed by the delta and b chains.

It is found in the cell membrane. The catalysed reaction is ATP + H2O + 4 H(+)(in) = ADP + phosphate + 5 H(+)(out). In terms of biological role, produces ATP from ADP in the presence of a proton gradient across the membrane. The alpha chain is a regulatory subunit. The protein is ATP synthase subunit alpha of Metamycoplasma arthritidis (strain 158L3-1) (Mycoplasma arthritidis).